A 124-amino-acid polypeptide reads, in one-letter code: Small ribosomal subunit protein uS12 (124 aa).

3-methylthioaspartic acid is present on Asp-89.

Belongs to the universal ribosomal protein uS12 family. In terms of assembly, part of the 30S ribosomal subunit. Contacts proteins S8 and S17. May interact with IF1 in the 30S initiation complex.

Functionally, with S4 and S5 plays an important role in translational accuracy. In terms of biological role, interacts with and stabilizes bases of the 16S rRNA that are involved in tRNA selection in the A site and with the mRNA backbone. Located at the interface of the 30S and 50S subunits, it traverses the body of the 30S subunit contacting proteins on the other side and probably holding the rRNA structure together. The combined cluster of proteins S8, S12 and S17 appears to hold together the shoulder and platform of the 30S subunit. The polypeptide is Small ribosomal subunit protein uS12 (Pectobacterium atrosepticum (strain SCRI 1043 / ATCC BAA-672) (Erwinia carotovora subsp. atroseptica)).